A 642-amino-acid chain; its full sequence is Threonine--tRNA ligase (642 aa).

The interval 239-530 (DHRKLGKELN…LTEHYAGAFP (292 aa)) is catalytic. Residues Cys-331, His-382, and His-507 each contribute to the Zn(2+) site.

Belongs to the class-II aminoacyl-tRNA synthetase family. As to quaternary structure, homodimer. Zn(2+) is required as a cofactor.

Its subcellular location is the cytoplasm. The catalysed reaction is tRNA(Thr) + L-threonine + ATP = L-threonyl-tRNA(Thr) + AMP + diphosphate + H(+). Its function is as follows. Catalyzes the attachment of threonine to tRNA(Thr) in a two-step reaction: L-threonine is first activated by ATP to form Thr-AMP and then transferred to the acceptor end of tRNA(Thr). Also edits incorrectly charged L-seryl-tRNA(Thr). In Lawsonia intracellularis (strain PHE/MN1-00), this protein is Threonine--tRNA ligase.